A 253-amino-acid polypeptide reads, in one-letter code: MATFLTNVVSIKPTIFSFQSESFTPLHTRVNVFSSKPFPSLAGTFSRSSRTRFIPYAVTETEEKPAALDPSSEAARRVYIGNIPRTVTNEQLTKLVEEHGAVEKVQVMYDKYSGRSRRFGFATMKSVEDANAVVEKLNGNTVEGREIKVNITEKPIASSPDLSVLQSEDSAFVDSPYKVYVGNLAKTVTKEMLENLFSEKGKVVSAKVSRVPGTSKSTGFGFVTFSSEEDVEAAIVALNNSLLEGQKIRVNKA.

The transit peptide at 1 to 56 directs the protein to the chloroplast; sequence MATFLTNVVSIKPTIFSFQSESFTPLHTRVNVFSSKPFPSLAGTFSRSSRTRFIPY. RRM domains are found at residues 76–154 and 177–253; these read RRVY…ITEK and YKVY…VNKA.

Belongs to the chloroplast-specific ribosomal protein cS22 family. As to quaternary structure, component of the chloroplast small ribosomal subunit (SSU). Mature 70S chloroplast ribosomes of higher plants consist of a small (30S) and a large (50S) subunit. The 30S small subunit contains 1 molecule of ribosomal RNA (16S rRNA) and 24 different proteins. The 50S large subunit contains 3 rRNA molecules (23S, 5S and 4.5S rRNA) and 33 different proteins. As to expression, expressed constitutively in roots, stems, flower buds, flowers and leaves.

The protein resides in the plastid. Its subcellular location is the chloroplast. In terms of biological role, component of the chloroplast ribosome (chloro-ribosome), a dedicated translation machinery responsible for the synthesis of chloroplast genome-encoded proteins, including proteins of the transcription and translation machinery and components of the photosynthetic apparatus. May have a role in the recruitment of stored chloroplast mRNAs for active protein synthesis. Bind single strand DNA (ssDNA) and RNA in vitro. Exhibits RNA chaperone activity. Negatively regulates resistance responses to abiotic stresses during seed germination (e.g. salt, dehydration, and low temperature) and seedling growth (e.g. salt). The polypeptide is Small ribosomal subunit protein cS22 (Arabidopsis thaliana (Mouse-ear cress)).